Here is a 780-residue protein sequence, read N- to C-terminus: Kojibiose phosphorylase (780 aa).

354–355 (WD) is a binding site for substrate. Residue Glu496 is the Proton donor of the active site. 608-609 (KQ) contributes to the substrate binding site.

This sequence belongs to the glycosyl hydrolase 65 family.

The catalysed reaction is kojibiose + phosphate = beta-D-glucose 1-phosphate + D-glucose. Its function is as follows. Catalyzes the reversible phosphorolysis of kojibiose into beta-D-glucose 1-phosphate (Glc1P) and D-glucose. In the reverse direction, uses Glc1P as acceptor to produce alpha-1,2-glucans up to a degree of polymerization of 6. In Halothermothrix orenii (strain H 168 / OCM 544 / DSM 9562), this protein is Kojibiose phosphorylase.